A 146-amino-acid polypeptide reads, in one-letter code: UPF0178 protein BCQ_2874 (146 aa).

It belongs to the UPF0178 family.

This Bacillus cereus (strain Q1) protein is UPF0178 protein BCQ_2874.